A 132-amino-acid polypeptide reads, in one-letter code: Myelin P2 protein (132 aa).

Serine 2 is subject to N-acetylserine. (9Z)-octadecenoate is bound at residue arginine 107. Residue arginine 107 coordinates hexadecanoate. The cysteines at positions 118 and 125 are disulfide-linked. Arginine 127–tyrosine 129 is a (9Z)-octadecenoate binding site. Arginine 127–tyrosine 129 contributes to the hexadecanoate binding site.

The protein belongs to the calycin superfamily. Fatty-acid binding protein (FABP) family. As to quaternary structure, monomer. In terms of tissue distribution, detected in spinal cord (at protein level).

It localises to the cytoplasm. In terms of biological role, may play a role in lipid transport protein in Schwann cells. May bind cholesterol. This chain is Myelin P2 protein (PMP2), found in Equus caballus (Horse).